Here is a 272-residue protein sequence, read N- to C-terminus: 5'-nucleotidase SurE (272 aa).

Residues D8, D9, S39, and N96 each coordinate a divalent metal cation.

Belongs to the SurE nucleotidase family. A divalent metal cation is required as a cofactor.

The protein localises to the cytoplasm. The enzyme catalyses a ribonucleoside 5'-phosphate + H2O = a ribonucleoside + phosphate. Its function is as follows. Nucleotidase that shows phosphatase activity on nucleoside 5'-monophosphates. This is 5'-nucleotidase SurE from Heliobacterium modesticaldum (strain ATCC 51547 / Ice1).